The primary structure comprises 233 residues: Small ribosomal subunit protein uS2 (233 aa).

This sequence belongs to the universal ribosomal protein uS2 family.

This Bacillus anthracis protein is Small ribosomal subunit protein uS2.